We begin with the raw amino-acid sequence, 415 residues long: NADH-quinone oxidoreductase subunit D (415 aa).

This sequence belongs to the complex I 49 kDa subunit family. As to quaternary structure, NDH-1 is composed of 14 different subunits. Subunits NuoB, C, D, E, F, and G constitute the peripheral sector of the complex.

It is found in the cell inner membrane. The enzyme catalyses a quinone + NADH + 5 H(+)(in) = a quinol + NAD(+) + 4 H(+)(out). NDH-1 shuttles electrons from NADH, via FMN and iron-sulfur (Fe-S) centers, to quinones in the respiratory chain. The immediate electron acceptor for the enzyme in this species is believed to be ubiquinone. Couples the redox reaction to proton translocation (for every two electrons transferred, four hydrogen ions are translocated across the cytoplasmic membrane), and thus conserves the redox energy in a proton gradient. The polypeptide is NADH-quinone oxidoreductase subunit D (Myxococcus xanthus (strain DK1622)).